The sequence spans 191 residues: Ankyrin repeat domain-containing protein 22 (191 aa).

4 ANK repeats span residues 39–68 (NGDT…NVNL), 72–100 (KERT…MPVL), 101–130 (LIGY…EVNA), and 134–163 (YGCT…DPTI).

The sequence is that of Ankyrin repeat domain-containing protein 22 (ANKRD22) from Homo sapiens (Human).